We begin with the raw amino-acid sequence, 506 residues long: NAD(P)H-quinone oxidoreductase subunit 2 (506 aa).

The next 13 helical transmembrane spans lie at 14-34 (AIIPEAFILLGIVGTLLVDLA), 42-62 (WAPSICYLSIGSSLLSLTLQW), 79-99 (LAIAFRAIIALSTLVSLLISW), 108-128 (PIGEFAAIVLSATLGAMLLCG), 132-152 (LISVFISLETLSVASYLLSGY), 167-187 (LLVGSAAAAVYLYGSSFLYGL), 206-226 (FITSLALVFVLSTVAFKIAAV), 240-260 (PTPVVAFLSVGSKTAGFAFAI), 276-296 (LLFTILAILSMALGNVVALAQ), 302-322 (MLAYSSIGQAGFVMIGIVSGT), 330-350 (VLYLAAYLFMNLGAFSCVILF), 374-394 (LGLSLCLLSLGGLPPMLGFFG), and 409-429 (LLVIVGLVTSVISIYYYISVI).

The protein belongs to the complex I subunit 2 family. As to quaternary structure, NDH-1 can be composed of about 15 different subunits; different subcomplexes with different compositions have been identified which probably have different functions.

It is found in the cellular thylakoid membrane. It carries out the reaction a plastoquinone + NADH + (n+1) H(+)(in) = a plastoquinol + NAD(+) + n H(+)(out). The enzyme catalyses a plastoquinone + NADPH + (n+1) H(+)(in) = a plastoquinol + NADP(+) + n H(+)(out). NDH-1 shuttles electrons from an unknown electron donor, via FMN and iron-sulfur (Fe-S) centers, to quinones in the respiratory and/or the photosynthetic chain. The immediate electron acceptor for the enzyme in this species is believed to be plastoquinone. Couples the redox reaction to proton translocation, and thus conserves the redox energy in a proton gradient. Cyanobacterial NDH-1 also plays a role in inorganic carbon-concentration. The polypeptide is NAD(P)H-quinone oxidoreductase subunit 2 (Prochlorococcus marinus (strain MIT 9301)).